Consider the following 475-residue polypeptide: RNA pseudouridine synthase 3, mitochondrial (475 aa).

The transit peptide at 1 to 15 (MLCRRRRVGAAVRWL) directs the protein to the mitochondrion. The interval 40-74 (RLGKPKPGPRPRQLLSLPPFPGGGDGDPLPGRKAA) is disordered. Positions 90–160 (ADVPQEVVQA…GEIKKRYETI (71 aa)) constitute an S4 RNA-binding domain. Residue D230 is part of the active site.

The protein belongs to the pseudouridine synthase RluA family.

The protein resides in the mitochondrion. The enzyme catalyses a uridine in RNA = a pseudouridine in RNA. This is RNA pseudouridine synthase 3, mitochondrial from Oryza sativa subsp. japonica (Rice).